Reading from the N-terminus, the 376-residue chain is Methionine import ATP-binding protein MetN 2 (376 aa).

The interval 1–25 is disordered; the sequence is MTATAQRQRPIDTTGAGQRAQQAEL. The 240-residue stretch at 34 to 273 folds into the ABC transporter domain; sequence VRFINLGKTY…PQHEVSKTLL (240 aa). Residue 70–77 participates in ATP binding; it reads GRSGAGKS.

It belongs to the ABC transporter superfamily. Methionine importer (TC 3.A.1.24) family. As to quaternary structure, the complex is composed of two ATP-binding proteins (MetN), two transmembrane proteins (MetI) and a solute-binding protein (MetQ).

It is found in the cell inner membrane. It catalyses the reaction L-methionine(out) + ATP + H2O = L-methionine(in) + ADP + phosphate + H(+). The catalysed reaction is D-methionine(out) + ATP + H2O = D-methionine(in) + ADP + phosphate + H(+). In terms of biological role, part of the ABC transporter complex MetNIQ involved in methionine import. Responsible for energy coupling to the transport system. This is Methionine import ATP-binding protein MetN 2 from Pseudomonas syringae pv. syringae (strain B728a).